The primary structure comprises 307 residues: Cytidine deaminase 7 (307 aa).

CMP/dCMP-type deaminase domains are found at residues 22–155 (TEPI…FTPD) and 185–307 (SDCS…FITE). 63 to 65 (NVE) serves as a coordination point for substrate. His76 contacts Zn(2+). The active-site Proton donor is the Glu78. Cys111 and Cys114 together coordinate Zn(2+).

The protein belongs to the cytidine and deoxycytidylate deaminase family. In terms of assembly, homodimer. The cofactor is Zn(2+).

It catalyses the reaction cytidine + H2O + H(+) = uridine + NH4(+). The enzyme catalyses 2'-deoxycytidine + H2O + H(+) = 2'-deoxyuridine + NH4(+). Functionally, this enzyme scavenges exogenous and endogenous cytidine and 2'-deoxycytidine for UMP synthesis. The protein is Cytidine deaminase 7 (CDA7) of Arabidopsis thaliana (Mouse-ear cress).